A 520-amino-acid chain; its full sequence is N-acetylgalactosamine-6-sulfatase (520 aa).

The signal sequence occupies residues 1–23; the sequence is MAACTAAQQLLLVLSALGLLAAG. Residues 24-377 are catalytic domain; it reads APQPPNIVLL…PTMLKGQMMD (354 aa). 3 residues coordinate Ca(2+): aspartate 36, aspartate 37, and cysteine 76. Cysteine 76 functions as the Nucleophile in the catalytic mechanism. At cysteine 76 the chain carries 3-oxoalanine (Cys). Residue histidine 139 is part of the active site. N-linked (GlcNAc...) asparagine glycosylation occurs at asparagine 201. Aspartate 286 and asparagine 287 together coordinate Ca(2+). Cysteine 306 and cysteine 417 are joined by a disulfide. The N-linked (GlcNAc...) asparagine glycan is linked to asparagine 421. 2 disulfide bridges follow: cysteine 487–cysteine 516 and cysteine 499–cysteine 505.

Belongs to the sulfatase family. As to quaternary structure, homodimer. It depends on Ca(2+) as a cofactor. In terms of processing, the conversion to 3-oxoalanine (also known as C-formylglycine, FGly), of a serine or cysteine residue in prokaryotes and of a cysteine residue in eukaryotes, is critical for catalytic activity. As to expression, widely expressed. Higher expression in liver and kidney.

It localises to the lysosome. It carries out the reaction Hydrolysis of the 6-sulfate groups of the N-acetyl-D-galactosamine 6-sulfate units of chondroitin sulfate and of the D-galactose 6-sulfate units of keratan sulfate.. The chain is N-acetylgalactosamine-6-sulfatase (Galns) from Mus musculus (Mouse).